A 30-amino-acid chain; its full sequence is Cycloviolacin-H1 (30 aa).

Positions 1–30 (GIPCGESCVYIPCLTSAIGCSCKSKVCYRN) form a cross-link, cyclopeptide (Gly-Asn). 3 cysteine pairs are disulfide-bonded: C4/C20, C8/C22, and C13/C27.

It belongs to the cyclotide family. Bracelet subfamily. In terms of processing, this is a cyclic peptide.

In terms of biological role, probably participates in a plant defense mechanism. This Viola hederacea (Australian violet) protein is Cycloviolacin-H1.